The sequence spans 533 residues: Probable ribonuclease ZC3H12D (533 aa).

An RNase NYN domain is found at L92–S246. The segment at K251–R282 adopts a C3H1-type zinc-finger fold. The necessary for interaction with ZC3H12A stretch occupies residues H262–G368. The segment at L302 to P335 is disordered.

Belongs to the ZC3H12 family. Interacts with ZC3H12A. Mg(2+) is required as a cofactor. In terms of tissue distribution, expressed at low levels in bone marrow derived macrophages.

It is found in the cytoplasm. It localises to the P-body. In terms of biological role, may regulate cell growth likely by suppressing RB1 phosphorylation. May function as RNase and regulate the levels of target RNA species (Potential). In association with ZC3H12A enhances the degradation of interleukin IL-6 mRNA level in activated macrophages. Serve as a tumor suppressor in certain leukemia cells. Overexpression inhibits the G1 to S phase progression through suppression of RB1 phosphorylation. The protein is Probable ribonuclease ZC3H12D of Mus musculus (Mouse).